Here is a 145-residue protein sequence, read N- to C-terminus: MRTTFMAKATDVERKWLLIDAEGKTLGRLSSEVASLLRGKHKPTFTPHVDCGDHVILINVEKIVLTGNKLDKKVYYRHSGHPGGLKQTVARDLLANKPERMLELAIKGMLPKGSLGRQMFNKLHVYAGDTHKQEAQQPEVYELRG.

It belongs to the universal ribosomal protein uL13 family. In terms of assembly, part of the 50S ribosomal subunit.

In terms of biological role, this protein is one of the early assembly proteins of the 50S ribosomal subunit, although it is not seen to bind rRNA by itself. It is important during the early stages of 50S assembly. This chain is Large ribosomal subunit protein uL13, found in Exiguobacterium sibiricum (strain DSM 17290 / CCUG 55495 / CIP 109462 / JCM 13490 / 255-15).